The sequence spans 511 residues: Early growth response protein 1 (511 aa).

Disordered regions lie at residues 133–169 and 291–312; these read ASIP…LSCS and PSRM…RPYA. The segment covering 137 to 169 has biased composition (low complexity); sequence SSTSQATHPSSSSTSSIPSSSSSSTSSASLSCS. 3 consecutive C2H2-type zinc fingers follow at residues 311–335, 341–363, and 369–391; these read YACP…IRIH, FQCR…IRTH, and FACE…TKIH. A disordered region spans residues 384–406; that stretch reads RKRHTKIHMRQKDKKAEKGATAA. Over residues 386-396 the composition is skewed to basic residues; sequence RHTKIHMRQKD.

Belongs to the EGR C2H2-type zinc-finger protein family. As to expression, detected in muscle and brain.

The protein localises to the nucleus. It localises to the cytoplasm. Functionally, transcriptional regulator. Recognizes and binds to the DNA sequence 5'-GCG(T/G)GGGCG-3'(EGR-site) in the promoter region of target genes. Binds double-stranded target DNA, irrespective of the cytosine methylation status. Regulates the transcription of numerous target genes, and thereby plays an important role in regulating the response to growth factors, DNA damage, and ischemia. Plays a role in the regulation of cell survival, proliferation and cell death. Mediates responses to ischemia and hypoxia; regulates the expression of proteins that are involved in inflammatory processes. Plays a role in regulating the expression of circadian clock genes. Plays a role in the organization of Muller glia cells in the inner and outer plexiform layers of the retina. The chain is Early growth response protein 1 (egr1) from Danio rerio (Zebrafish).